Consider the following 101-residue polypeptide: Large ribosomal subunit protein uL24 (101 aa).

This sequence belongs to the universal ribosomal protein uL24 family. Part of the 50S ribosomal subunit.

Its function is as follows. One of two assembly initiator proteins, it binds directly to the 5'-end of the 23S rRNA, where it nucleates assembly of the 50S subunit. One of the proteins that surrounds the polypeptide exit tunnel on the outside of the subunit. The polypeptide is Large ribosomal subunit protein uL24 (Thermobifida fusca (strain YX)).